The sequence spans 634 residues: DNA-directed RNA polymerase subunit gamma (634 aa).

Zn(2+) contacts are provided by Cys-74, Cys-76, Cys-89, and Cys-92. The Mg(2+) site is built by Asp-471, Asp-473, and Asp-475.

The protein belongs to the RNA polymerase beta' chain family. RpoC1 subfamily. In cyanobacteria the RNAP catalytic core is composed of 2 alpha, 1 beta, 1 beta', 1 gamma and 1 omega subunit. When a sigma factor is associated with the core the holoenzyme is formed, which can initiate transcription. It depends on Mg(2+) as a cofactor. Zn(2+) is required as a cofactor.

It carries out the reaction RNA(n) + a ribonucleoside 5'-triphosphate = RNA(n+1) + diphosphate. Functionally, DNA-dependent RNA polymerase catalyzes the transcription of DNA into RNA using the four ribonucleoside triphosphates as substrates. The polypeptide is DNA-directed RNA polymerase subunit gamma (Synechococcus sp. (strain CC9605)).